Here is a 160-residue protein sequence, read N- to C-terminus: Sodium/proline symporter (160 aa).

The next 2 helical transmembrane spans lie at Pro6 to Trp26 and Ile68 to Ile88.

The protein belongs to the sodium:solute symporter (SSF) (TC 2.A.21) family.

The protein resides in the cell inner membrane. The enzyme catalyses L-proline(in) + Na(+)(in) = L-proline(out) + Na(+)(out). Functionally, catalyzes the sodium-dependent uptake of extracellular L-proline. The chain is Sodium/proline symporter from Klebsiella oxytoca.